Consider the following 1274-residue polypeptide: MEELFNALPQPLQQLSLALAGEIPLTDHIFEQAASTWHVQPRSLTYKLLDHIPFSTPVVVPPSIYHSLDWSKCFAVNQDRVERVPTIDDPDDVYVPNSDIGPLLTSLHTIPDYGFLHPAIENDATTLRAERARCASTFYKIASSQARQVKLDPIRMLGFLLLVQARPRVPSGLVTDQPTRRDPTQSPALHAIWQVMQYYKVAGVYYAPALVVPSGAIWWIPPPGKRNVVSVQYLLTDLINLAILAHMTDMSPTLELTGVLMYLRAASSHSHAYTLLQMKSVFPALSLRSMYRNKGFGGKAPAIEWTEPRSKYKFRWTGVTQLHDGLRPRSPSMDVPTLEVLTKYELVDIGHIIIRERNAHPRHNHDSVRFVRDVMALTSGMYLVRQPTMSVLREYSQVPDIKDPIPPSAWTGPIGNVRYLLPSVQGPARHLYDTWRAAARQIAQDPQWHDPLNQAIMRAQYVTARGGSSASLKFALKVTGIVLPEYDDSKVKKSSKIYQAAQIARIAFMLLIAAIHAEVTMGIRNQVQRRARSIMPLNVIQQAISAPHTLVANYINKHMNLSTTSGSVVTDKVIPLILYASTPPNTVVNVDIKACDASITYNYFLSVICGAMHEGFEVGNADAAFMGVPSTIVSDRRSSVAPYSRPISGLQTMVQHLADLYAAGFRYSVSDAFSSGNKFSFPTSTFPSGSTATSTEHTANNSTMMEYFLNVHAPSHVKSASLKRILTDMTIQRNYVCQGDDGILLLPHEAASKISADDMNELLTCLRDYGQLFGWNYDIDWSDTAEYLKLYALMGCRIPNTSRHPPVGKEYAAPQTDEIWPSLIDIVIGHHLNGVTDVLNWREWLRFSWAFACYSSRGGYTNPKGQSFSAQYPWWTFVYLGIPPILLPGQTPFIHSCYMPPGDQGMFSILNGWRDWLISHASTTLPPLRHNHPVWGLSDVPSLLSQFGVYAGYHAAQHYRRPKPAPETASSDSINQITSDLTEYLFYDSALKARVMKGRYNWERLSSSLSLNVGSRVPSLFDVPGKWVAAGRDAEKPPPSSVEDMFTSLNRCIRRPTHSFSRLLELYLRVHVTLGESIPLAIDPDVPQVAGADPANDDHWFKYTCLGDIPSATRNYFGESLFVGRVVSGLDVEAVDATLLRLKILGAPPEAFIAVLNGIGMSDSEAHQIAGRISLANAQLVQIARVVHLSIPSSWMTLNTGPYIHHHAYDFKPGITQPSAKSRDKSIWMSPILKLLCTSYAMTVAGPVRTSIVTEIDGSAAALSGNLRVWMRDV.

The 238-residue stretch at 561 to 798 (LSTTSGSVVT…KLYALMGCRI (238 aa)) folds into the RdRp catalytic domain.

This sequence belongs to the reoviridae RNA-directed RNA polymerase family.

Its subcellular location is the virion. It carries out the reaction RNA(n) + a ribonucleoside 5'-triphosphate = RNA(n+1) + diphosphate. Its function is as follows. RNA-directed RNA polymerase that is involved in transcription and genome replication. Following infection, it catalyzes the synthesis of fully conservative plus strands. After core assembly, which consists in recruitment of one capped plus-strand for each genomic segments and polymerase complexes, the polymerase switches mode and catalyzes the synthesis of complementary minus-strands. This chain is RNA-directed RNA polymerase VP2 (S2), found in Aquareovirus C (isolate Golden shiner/USA/GSRV/1977) (AQRV-C).